The chain runs to 433 residues: Putative tartrate transporter (433 aa).

11 consecutive transmembrane segments (helical) span residues isoleucine 17–phenylalanine 37, glycine 47–phenylalanine 67, isoleucine 82–glutamine 102, leucine 113–phenylalanine 133, alanine 139–isoleucine 159, tryptophan 177–leucine 197, valine 242–tryptophan 262, leucine 275–tryptophan 295, leucine 314–isoleucine 334, leucine 350–isoleucine 370, and phenylalanine 395–valine 415.

The protein belongs to the major facilitator superfamily. Phthalate permease family.

The protein resides in the cell membrane. Functionally, component of the tartrate utilization system and may allow entry of tartrate and tartrate dehydrogenase. The polypeptide is Putative tartrate transporter (ttuB) (Agrobacterium vitis (Rhizobium vitis)).